Consider the following 302-residue polypeptide: Aliphatic sulfonates import ATP-binding protein SsuB (302 aa).

Residues 30 to 57 (PATADAQHTADAQHTADAQHTADAQHTA) are compositionally biased toward low complexity. A disordered region spans residues 30 to 65 (PATADAQHTADAQHTADAQHTADAQHTAETAETRGA). Residues 70–284 (IRIRGLRRTF…RRTDPAFDRL (215 aa)) enclose the ABC transporter domain. 102-109 (GRSGSGKS) lines the ATP pocket.

The protein belongs to the ABC transporter superfamily. Aliphatic sulfonates importer (TC 3.A.1.17.2) family. The complex is composed of two ATP-binding proteins (SsuB), two transmembrane proteins (SsuC) and a solute-binding protein (SsuA).

The protein localises to the cell membrane. The enzyme catalyses ATP + H2O + aliphatic sulfonate-[sulfonate-binding protein]Side 1 = ADP + phosphate + aliphatic sulfonateSide 2 + [sulfonate-binding protein]Side 1.. Its function is as follows. Part of the ABC transporter complex SsuABC involved in aliphatic sulfonates import. Responsible for energy coupling to the transport system. The protein is Aliphatic sulfonates import ATP-binding protein SsuB of Frankia casuarinae (strain DSM 45818 / CECT 9043 / HFP020203 / CcI3).